Here is a 228-residue protein sequence, read N- to C-terminus: Cytidylate kinase (228 aa).

10 to 18 (GPSGSGKGT) provides a ligand contact to ATP.

Belongs to the cytidylate kinase family. Type 1 subfamily.

It is found in the cytoplasm. It catalyses the reaction CMP + ATP = CDP + ADP. The enzyme catalyses dCMP + ATP = dCDP + ADP. In Acinetobacter baumannii (strain SDF), this protein is Cytidylate kinase.